Here is a 1375-residue protein sequence, read N- to C-terminus: MSKKKFIDKEISKYVLRRDYSKIEKNFNEPNLLNLQKNAFHKFIDTELEGTIKSIFPIKSIGGRYSLEYIGMKLEKPKRSEKEARNEGKTYDRPLYVDLAIVDNESGEVKKTTKSSKNKASNTDGIFFASIPMITEKGTFIVNGIEKFVISQIVRSPGAYILTKSQIKLSNSRKRIQEGYICEILPAKGTLFFIFMAENKDFIQVMFRDAIGESTHTIPITAFLKALGLNKEEILNIFANHKSIKNSLDNEIYNEKDVFETDELINLRKNLNSSDSNRSYGVDTKLRELFKKYSSLKSQLEAEGKNAEKQKELNEVINNIISEKAAKDLVINLSISTKNIDSKFRLSNKETTYQSIIYNHFFSNKSFDLSKAGRFKMARKMRLSERLYQRVLAEDLKDINGKVVIKKNTLIQKHELDTIKQLTKEGKLGIVHNVNLDERISKMANVVKYEKINVYQDNDSQDEFIPIIGTDTSLDKPTLSISDILSITSYVINLDYDIGFYDDIDHLGNKRLKLIDELLKTRAQAGLVRIEKFINDKLAIADGANKSQEQSEEQEPKKSLTVKSIINTKPFQISFKEFFNSHQLTQFLDQQNPLAELTNKRRISAMGPGGISREDPNLDIRDVHYSHYGKICPIETPEGMNIGLIMSLATYASTDENGFLITPYRIVKNGVITDEIRWLTALSEDEYIIACSNLNVEKNKFKEDKVLCRYRSSWEFFDVKDVDFIDISPKQVVSIAASSIPFLENDDANRALMGANMQRQATPLISPIAPIVGTGNEYKIAHDSGMAAVYDGEKDGTVSYVDGGTIKIKSGSEEKVYELTKFNKSNQNTCNNQVPIVSVGEKVTKGTTIADGPAMSNGELALGQNVLVAFTTWSGYNYEDAIILSKRLFMEDIFTSIHIVEYSVDCLKTKNGDEEITRDIPNVSESSKKYLDDEGIIMVGAEVKEGDVLVGKISPKGQVELTSEEKLLQAIFGDKSKNHKETSLKVPHGGEGTVAMVKRFKVEDDYELNADVIEQIKVYVVQKRKIQIGDKMAGRHGNKGIISKIVPVEDMPHLEDGTTIDIMLNPLGVPSRMNIGQILELHLGLAMKKLTLSKVLELYYDKKPASDFSLWFGIHEEASRNLIKNLEKILNEKQIKSLDQANKEFTDFDLSLALSRSGISREKLIYKTATPVFEGVNRTDLKEAMTEAGIDPINGKLGEGKSGKFNLIDGRTGEYFDGEVSVGIMYMLKLDHMVDDKIHSRAVGPYSKITQQPLGGKSQNGGQRFGEMEVWALEAYGAAHNLRELLTIKSDDVKGRNNTYNAIIKGKPIPESGLPESFKLLTKQLQGLGLQVSITKELGKANNNNFKDINEYISNITNNAIKNDEDQQIIEEMDI.

It belongs to the RNA polymerase beta chain family. The RNAP catalytic core consists of 2 alpha, 1 beta, 1 beta' and 1 omega subunit. When a sigma factor is associated with the core the holoenzyme is formed, which can initiate transcription.

The catalysed reaction is RNA(n) + a ribonucleoside 5'-triphosphate = RNA(n+1) + diphosphate. Its function is as follows. DNA-dependent RNA polymerase catalyzes the transcription of DNA into RNA using the four ribonucleoside triphosphates as substrates. The protein is DNA-directed RNA polymerase subunit beta of Malacoplasma penetrans (strain HF-2) (Mycoplasma penetrans).